The chain runs to 669 residues: DNA ligase (669 aa).

NAD(+) contacts are provided by residues 34–38 (DAEYD), 83–84 (SL), and Glu114. Lys116 (N6-AMP-lysine intermediate) is an active-site residue. Residues Arg137, Glu171, Lys287, and Lys311 each contribute to the NAD(+) site. Residues Cys405, Cys408, Cys423, and Cys428 each coordinate Zn(2+). One can recognise a BRCT domain in the interval 591–669 (NVESYFAGKT…EERFLQELNK (79 aa)).

Belongs to the NAD-dependent DNA ligase family. LigA subfamily. The cofactor is Mg(2+). Mn(2+) is required as a cofactor.

It catalyses the reaction NAD(+) + (deoxyribonucleotide)n-3'-hydroxyl + 5'-phospho-(deoxyribonucleotide)m = (deoxyribonucleotide)n+m + AMP + beta-nicotinamide D-nucleotide.. DNA ligase that catalyzes the formation of phosphodiester linkages between 5'-phosphoryl and 3'-hydroxyl groups in double-stranded DNA using NAD as a coenzyme and as the energy source for the reaction. It is essential for DNA replication and repair of damaged DNA. In Bacillus anthracis (strain A0248), this protein is DNA ligase.